Consider the following 190-residue polypeptide: Lipid A acyltransferase PagP (190 aa).

A signal peptide spans 1–18 (MKRLISCLTIICALNASA). Residues His60, Asp103, and Ser104 contribute to the active site.

This sequence belongs to the lipid A palmitoyltransferase family. As to quaternary structure, homodimer.

It localises to the cell outer membrane. The enzyme catalyses a lipid A + a 1,2-diacyl-sn-glycero-3-phosphocholine = a hepta-acyl lipid A + a 2-acyl-sn-glycero-3-phosphocholine. It catalyses the reaction a lipid IVA + a 1,2-diacyl-sn-glycero-3-phosphocholine = a lipid IVB + a 2-acyl-sn-glycero-3-phosphocholine. It carries out the reaction a lipid IIA + a 1,2-diacyl-sn-glycero-3-phosphocholine = a lipid IIB + a 2-acyl-sn-glycero-3-phosphocholine. In terms of biological role, transfers a fatty acid residue from the sn-1 position of a phospholipid to the N-linked hydroxyfatty acid chain on the proximal unit of lipid A or its precursors. The sequence is that of Lipid A acyltransferase PagP from Legionella pneumophila (strain Paris).